A 184-amino-acid polypeptide reads, in one-letter code: Shikimate kinase (184 aa).

20–25 serves as a coordination point for ATP; that stretch reads GVGKSR. Ser-24 provides a ligand contact to Mg(2+). Substrate is bound by residues Asp-42, Arg-66, and Gly-88. Arg-127 contributes to the ATP binding site. Arg-146 contacts substrate. Arg-162 is a binding site for ATP.

Belongs to the shikimate kinase family. As to quaternary structure, monomer. Requires Mg(2+) as cofactor.

It is found in the cytoplasm. The catalysed reaction is shikimate + ATP = 3-phosphoshikimate + ADP + H(+). It functions in the pathway metabolic intermediate biosynthesis; chorismate biosynthesis; chorismate from D-erythrose 4-phosphate and phosphoenolpyruvate: step 5/7. Functionally, catalyzes the specific phosphorylation of the 3-hydroxyl group of shikimic acid using ATP as a cosubstrate. This chain is Shikimate kinase, found in Thermus thermophilus (strain ATCC 27634 / DSM 579 / HB8).